Consider the following 799-residue polypeptide: Protein translocase subunit SecA 1 (799 aa).

Residues glutamine 85, 103 to 107 (GEGKT), and aspartate 504 each bind ATP.

Belongs to the SecA family. In terms of assembly, monomer and homodimer. Part of the essential Sec protein translocation apparatus which comprises SecA, SecYEG and auxiliary proteins SecDF. Other proteins may also be involved.

The protein resides in the cell membrane. It localises to the cytoplasm. It catalyses the reaction ATP + H2O + cellular proteinSide 1 = ADP + phosphate + cellular proteinSide 2.. In terms of biological role, part of the Sec protein translocase complex. Interacts with the SecYEG preprotein conducting channel. Has a central role in coupling the hydrolysis of ATP to the transfer of proteins into and across the cell membrane, serving as an ATP-driven molecular motor driving the stepwise translocation of polypeptide chains across the membrane. The protein is Protein translocase subunit SecA 1 of Lactobacillus johnsonii (strain CNCM I-12250 / La1 / NCC 533).